We begin with the raw amino-acid sequence, 414 residues long: Glutamyl-tRNA reductase (414 aa).

Substrate is bound by residues 48 to 51 (TCNR), serine 104, 109 to 111 (EAQ), and glutamine 115. Cysteine 49 acts as the Nucleophile in catalysis. 184–189 (GAGEMI) contacts NADP(+).

It belongs to the glutamyl-tRNA reductase family. As to quaternary structure, homodimer.

It catalyses the reaction (S)-4-amino-5-oxopentanoate + tRNA(Glu) + NADP(+) = L-glutamyl-tRNA(Glu) + NADPH + H(+). It participates in porphyrin-containing compound metabolism; protoporphyrin-IX biosynthesis; 5-aminolevulinate from L-glutamyl-tRNA(Glu): step 1/2. In terms of biological role, catalyzes the NADPH-dependent reduction of glutamyl-tRNA(Glu) to glutamate 1-semialdehyde (GSA). The chain is Glutamyl-tRNA reductase from Methylobacillus flagellatus (strain ATCC 51484 / DSM 6875 / VKM B-1610 / KT).